Consider the following 293-residue polypeptide: Non-homologous end joining protein Ku (293 aa).

The region spanning 10–195 (ISFGLVHIPV…KLDKRELEMA (186 aa)) is the Ku domain. A required for dimerization region spans residues 216–229 (SDKIMKLVEEKAAK). The interval 260–293 (RSRAGGGKDKGSEKAGADAKGRAKSGASRSRRKA) is disordered. The span at 265 to 280 (GGKDKGSEKAGADAKG) shows a compositional bias: basic and acidic residues.

Belongs to the prokaryotic Ku family. Homodimer, may form higher-order multimers on DNA. Non-dimerized protein does not stimulate LigD ligase activity. Probably interacts with LigD.

Its function is as follows. With LigD forms a non-homologous end joining (NHEJ) DNA repair enzyme, which repairs dsDNA breaks with reduced fidelity. Stimulates rNTP addition to DSB and end joining (ligation) of linear DNA by LigD, on 3'-overhangs and probably also 5'-overhangs and blunt dsDNA breaks. Binds both ends of linear dsDNA protecting it from exonuclease activity. This Pseudomonas aeruginosa (strain ATCC 15692 / DSM 22644 / CIP 104116 / JCM 14847 / LMG 12228 / 1C / PRS 101 / PAO1) protein is Non-homologous end joining protein Ku.